Here is an 81-residue protein sequence, read N- to C-terminus: Acyl carrier protein (81 aa).

One can recognise a Carrier domain in the interval 1 to 79 (MDREEILQKI…EAVDYVVEHQ (79 aa)). O-(pantetheine 4'-phosphoryl)serine is present on serine 39.

The protein belongs to the acyl carrier protein (ACP) family. In terms of processing, 4'-phosphopantetheine is transferred from CoA to a specific serine of apo-ACP by AcpS. This modification is essential for activity because fatty acids are bound in thioester linkage to the sulfhydryl of the prosthetic group.

Its subcellular location is the cytoplasm. It participates in lipid metabolism; fatty acid biosynthesis. In terms of biological role, carrier of the growing fatty acid chain in fatty acid biosynthesis. This chain is Acyl carrier protein, found in Rubrobacter xylanophilus (strain DSM 9941 / JCM 11954 / NBRC 16129 / PRD-1).